The chain runs to 682 residues: Inactive protein-arginine deiminase type-6 (682 aa).

Serine 2 and serine 434 each carry phosphoserine.

The protein belongs to the protein arginine deiminase family. Homodimers. Associates with alpha-tubulin. Phosphorylation at Ser-2, possibly by RSK-type kinases, and Ser-434 creates binding sites for 14-3-3 proteins. In terms of tissue distribution, expressed at very high levels in oocytes. Weakly expressed in testis. Expressed in primordial, primary, secondary and Graafian follicles, and in immature oocytes, mature eggs and blastocyst (at protein level).

It localises to the cytoplasm. It is found in the nucleus. Its subcellular location is the cytoplasmic vesicle. The protein localises to the secretory vesicle. The protein resides in the cortical granule. Structural constituent of cytoplasmic lattices, which plays a key role in early embryonic development. Cytoplasmic lattices consist in fibrous structures found in the cytoplasm of oocytes and preimplantation embryos. They are required to store maternal proteins critical for embryonic development, such as ribosomal proteins and proteins that control epigenetic reprogramming of the preimplantation embryo, and prevent their degradation or activation. In contrast to other members of the family, does not show protein-arginine deiminase activity due to its inability to bind Ca(2+). In Mus musculus (Mouse), this protein is Inactive protein-arginine deiminase type-6.